Consider the following 1006-residue polypeptide: Serine/threonine-protein phosphatase BSL3 (1006 aa).

The interval 1 to 67 (MDLDSSMVPE…QQQQQPQVTA (67 aa)) is disordered. Composition is skewed to low complexity over residues 38–47 (SESESASLTP) and 54–67 (QQQQ…QVTA). 5 Kelch repeats span residues 138–184 (TSAG…VATA), 242–290 (YLMA…TASA), 295–345 (LLLL…VFVN), 351–398 (SGGA…DAAG), and 419–465 (LIFI…TPPG). Disordered regions lie at residues 454–494 (AAAA…LGSP) and 552–579 (GEVE…IKPD). The residue at position 616 (Ser616) is a Phosphoserine. 4 residues coordinate Mn(2+): Asp709, His711, Asp743, and Asn775. The active-site Proton donor is the His776. Residues His828 and His907 each coordinate Mn(2+). Ser964 carries the post-translational modification Phosphoserine. Residues 982–1006 (NVNRPPTPTRGRPQNPNDRGSLAWI) form a disordered region.

The protein belongs to the PPP phosphatase family. BSU subfamily. The cofactor is Mn(2+). Expressed throughout the plant, with a higher level in younger parts.

The protein localises to the nucleus. The catalysed reaction is O-phospho-L-seryl-[protein] + H2O = L-seryl-[protein] + phosphate. It carries out the reaction O-phospho-L-threonyl-[protein] + H2O = L-threonyl-[protein] + phosphate. Phosphatase involved in elongation process, probably by acting as a regulator of brassinolide signaling. This Arabidopsis thaliana (Mouse-ear cress) protein is Serine/threonine-protein phosphatase BSL3 (BSL3).